The chain runs to 299 residues: MTSFSAPGSPVDTVLLTSPAGAGRTEAIRIFEDLGYLCLNHVWPELVPTFLKHYAPIAPRLVLCLASRPEADAQAGLIAARVALRSLARTTVHVHLDCPEGVLLSRYALTRRPHPWFDHGKGLLAAIRAERTALEPVRALADEVVDTGPLELAQLRVHLGALVGGRPTELPVTVMSFGFKRGVPADAQFVLDIRFLPNPYYESALKPLTGLDVGVAEYVFASEQSQATYRSLLEFLRFLLHQYRQDRRSQLLIAIGCTGGQHRSVAFVERLSGDLAAEGFACRPSHRDLAVNRLQELSR.

18-25 is a binding site for ATP; that stretch reads SPAGAGRT.

This sequence belongs to the RapZ-like family.

Functionally, displays ATPase and GTPase activities. This is Nucleotide-binding protein glr4163 from Gloeobacter violaceus (strain ATCC 29082 / PCC 7421).